A 245-amino-acid chain; its full sequence is DNA repair protein RecO (245 aa).

It belongs to the RecO family.

Its function is as follows. Involved in DNA repair and RecF pathway recombination. The protein is DNA repair protein RecO of Erwinia tasmaniensis (strain DSM 17950 / CFBP 7177 / CIP 109463 / NCPPB 4357 / Et1/99).